Consider the following 137-residue polypeptide: Prostate and testis expressed protein 13 (137 aa).

The N-terminal stretch at 1-20 (MFQKLLLSVFIILLMDVGER) is a signal peptide. Residues 28 to 114 (RHCNLCSHYD…CIDRNYCNDG (87 aa)) enclose the UPAR/Ly6 domain. Cystine bridges form between Cys-30–Cys-60, Cys-33–Cys-41, Cys-48–Cys-84, Cys-87–Cys-104, and Cys-105–Cys-111. An N-linked (GlcNAc...) asparagine glycan is attached at Asn-57.

Belongs to the PATE family. As to expression, strongly expressed in the epididymis, including the initial segment, caput, corpus and cauda regions. Weakly expressed in prostate.

Its subcellular location is the secreted. The protein is Prostate and testis expressed protein 13 of Mus musculus (Mouse).